The chain runs to 303 residues: N-acetyl-D-glucosamine kinase (303 aa).

ATP is bound by residues 4–11 (GFDVGGTK) and 133–140 (GFGGGLVF). The Zn(2+) site is built by histidine 157, cysteine 177, cysteine 179, and cysteine 184.

It belongs to the ROK (NagC/XylR) family. NagK subfamily.

The catalysed reaction is N-acetyl-D-glucosamine + ATP = N-acetyl-D-glucosamine 6-phosphate + ADP + H(+). Its pathway is cell wall biogenesis; peptidoglycan recycling. Catalyzes the phosphorylation of N-acetyl-D-glucosamine (GlcNAc) derived from cell-wall degradation, yielding GlcNAc-6-P. The chain is N-acetyl-D-glucosamine kinase from Photobacterium profundum (strain SS9).